The following is a 549-amino-acid chain: uncharacterized protein (549 aa).

Transmembrane regions (helical) follow at residues 1–21 (MEIF…GVVT), 28–48 (IPLP…TFGL), 50–70 (VEFD…FADG), 85–105 (IFGL…FLIY), 106–126 (WVVP…LSPT), 165–185 (FAVA…TVEF), 187–207 (KVAI…GRSL), 222–242 (IVLL…IGVS), 278–298 (LEFV…PGIL), 310–330 (NVEI…LMLV), 361–381 (ILIA…VLSI), and 398–418 (VFLA…MLPI).

The protein belongs to the monovalent cation:proton antiporter 1 (CPA1) transporter (TC 2.A.36) family.

Its subcellular location is the cell inner membrane. This is an uncharacterized protein from Escherichia coli (strain K12).